The primary structure comprises 234 residues: Enolase-phosphatase E1 (234 aa).

Residues Asp13 and Glu15 each contribute to the Mg(2+) site. Substrate contacts are provided by residues 127–128 and Lys164; that span reads SS. Asp191 contributes to the Mg(2+) binding site.

It belongs to the HAD-like hydrolase superfamily. MasA/MtnC family. Monomer. It depends on Mg(2+) as a cofactor.

It localises to the cytoplasm. Its subcellular location is the nucleus. It carries out the reaction 5-methylsulfanyl-2,3-dioxopentyl phosphate + H2O = 1,2-dihydroxy-5-(methylsulfanyl)pent-1-en-3-one + phosphate. The protein operates within amino-acid biosynthesis; L-methionine biosynthesis via salvage pathway; L-methionine from S-methyl-5-thio-alpha-D-ribose 1-phosphate: step 3/6. It functions in the pathway amino-acid biosynthesis; L-methionine biosynthesis via salvage pathway; L-methionine from S-methyl-5-thio-alpha-D-ribose 1-phosphate: step 4/6. Bifunctional enzyme that catalyzes the enolization of 2,3-diketo-5-methylthiopentyl-1-phosphate (DK-MTP-1-P) into the intermediate 2-hydroxy-3-keto-5-methylthiopentenyl-1-phosphate (HK-MTPenyl-1-P), which is then dephosphorylated to form the acireductone 1,2-dihydroxy-3-keto-5-methylthiopentene (DHK-MTPene). The polypeptide is Enolase-phosphatase E1 (Podospora anserina (strain S / ATCC MYA-4624 / DSM 980 / FGSC 10383) (Pleurage anserina)).